We begin with the raw amino-acid sequence, 999 residues long: Probable hemoglobin and hemoglobin-haptoglobin-binding protein 4 (999 aa).

The N-terminal stretch at 1 to 24 (MTNFRLNVLAYSVMLGLTASVAYA) is a signal peptide. Residues 25–52 (EPTNQPTNQPTNQPTNQPTNQPTNQNSN) are disordered. Tandem repeats lie at residues 26-29 (PTNQ), 30-33 (PTNQ), 34-37 (PTNQ), 38-41 (PTNQ), 42-45 (PTNQ), and 46-49 (PTNQ). The 6 X 4 AA tandem repeats of P-T-N-Q stretch occupies residues 26-49 (PTNQPTNQPTNQPTNQPTNQPTNQ). A compositionally biased stretch (low complexity) spans 26-50 (PTNQPTNQPTNQPTNQPTNQPTNQN). A TonB box motif is present at residues 58-65 (EQINVLGS). In terms of domain architecture, TBDR plug spans 68–195 (NNDNTPPKIA…LGGAVLFETK (128 aa)). Positions 203-999 (EKDWHIGYKA…NYKLSAEITF (797 aa)) constitute a TBDR beta-barrel domain. The short motif at 982-999 (NRFYSPGRNYKLSAEITF) is the TonB C-terminal box element.

It belongs to the TonB-dependent receptor family. Hemoglobin/haptoglobin binding protein subfamily.

Its subcellular location is the cell outer membrane. Its function is as follows. Acts as a receptor for hemoglobin or the hemoglobin/haptoglobin complex of the human host and is required for heme uptake. In Haemophilus influenzae (strain ATCC 51907 / DSM 11121 / KW20 / Rd), this protein is Probable hemoglobin and hemoglobin-haptoglobin-binding protein 4.